The following is a 344-amino-acid chain: 1-acyl-sn-glycerol-3-phosphate acyltransferase BAT2, chloroplastic (344 aa).

The N-terminal 49 residues, 1 to 49 (MDVASAPGVSSHPPYYSKPICSSQSSLIRIPINKGCCFARSSNLITSLH), are a transit peptide targeting the chloroplast. The chain crosses the membrane as a helical span at residues 113 to 133 (GICFCLVAGVSAIVLIVLMIT). Positions 188-193 (HQSFLD) match the HXXXXD motif motif. The helical transmembrane segment at 210-230 (TGIFVIPVIGWAMSMMGVVPL) threads the bilayer.

Belongs to the 1-acyl-sn-glycerol-3-phosphate acyltransferase family. In terms of tissue distribution, widely expressed.

It localises to the plastid. The protein localises to the chloroplast membrane. It carries out the reaction a fatty acyl-[ACP] + a 1-acyl-sn-glycero-3-phosphate = a 1,2-diacyl-sn-glycero-3-phosphate + holo-[ACP]. It catalyses the reaction a 1-acyl-sn-glycero-3-phosphate + an acyl-CoA = a 1,2-diacyl-sn-glycero-3-phosphate + CoA. It participates in phospholipid metabolism; CDP-diacylglycerol biosynthesis; CDP-diacylglycerol from sn-glycerol 3-phosphate: step 2/3. Its function is as follows. Plastidial enzyme of the prokaryotic glycerol-3-phosphate pathway that converts lysophosphatidic acid (LPA) into phosphatidic acid by incorporating an acyl moiety at position sn-2. Utilizes palmitoyl-ACP (16:0-ACP) to produce phosphatidic acid containing a saturated group at position sn-2, which is characteristic of lipids synthesized by the prokaryotic pathway. In vitro, can use 16:0-CoA as acyl donor. This Brassica napus (Rape) protein is 1-acyl-sn-glycerol-3-phosphate acyltransferase BAT2, chloroplastic.